The sequence spans 66 residues: Large ribosomal subunit protein bL35 (66 aa).

Composition is skewed to basic residues over residues 1 to 15 (MSKL…KRFK) and 22 to 43 (ILHK…RKRR). The disordered stretch occupies residues 1–43 (MSKLKTRSSAAKRFKVTATGKILHKKAGKRHNLSKKSESRKRR).

Belongs to the bacterial ribosomal protein bL35 family.

The chain is Large ribosomal subunit protein bL35 from Dictyoglomus turgidum (strain DSM 6724 / Z-1310).